The sequence spans 516 residues: rRNA N(6)-adenosine-methyltransferase ZCCHC4 (516 aa).

Residues Cys-40, His-42, Cys-66, Cys-75, Cys-127, Cys-130, His-142, and His-145 each coordinate Zn(2+). The GRF-type zinc-finger motif lies at 40 to 84 (CPHELGPTLLFVKVNQGKEETRRFYACSACRDRKDCNFFQWEDEK). Residues 174-177 (QYLF), Arg-204, Asp-227, 245-246 (NM), and Asp-278 contribute to the S-adenosyl-L-methionine site. Residues 339-360 (QVVDYDNHALYKHGKTGRKQSP) form a regulatory loop region. Residues Cys-383, Cys-386, His-396, Cys-397, Cys-400, Cys-403, His-413, Cys-414, Cys-417, Cys-420, His-427, Cys-428, Cys-431, Cys-434, His-439, and Cys-441 each coordinate Zn(2+). The DHHC domain maps to 398-448 (EHCNSCTSKDGRKWNHCFLCKKCVKPSWIHCSICNHCALPDHSCKGPKDGC). The CCHC-type zinc-finger motif lies at 446-463 (DGCFICGELDHKRSACPN). Over residues 472–484 (KAVRKQKQRKSNK) the composition is skewed to basic residues. The tract at residues 472 to 516 (KAVRKQKQRKSNKMKMETTKGQSMNHTSATRKKKRRERTHQYLCS) is disordered. A compositionally biased stretch (polar residues) spans 490–499 (TKGQSMNHTS). Residues 500–509 (ATRKKKRRER) show a composition bias toward basic residues.

It belongs to the ZCCHC4 family. Interacts with components of the ASC-1 complex TRIP4, ASCC1, ASCC2 and ASCC3. Interact with AHCYL1 and AHCYL2. Interact with YTHDC2.

It is found in the cytoplasm. Its subcellular location is the nucleus. The protein resides in the nucleolus. It catalyses the reaction adenosine(4220) in 28S rRNA + S-adenosyl-L-methionine = N(6)-methyladenosine(4220) in 28S rRNA + S-adenosyl-L-homocysteine + H(+). Its function is as follows. rRNA N6-methyltransferase that specifically methylates the adenine in position 4220 of 28S rRNA. N6-methylation of adenine(4220) in 28S rRNA is required for translation. This chain is rRNA N(6)-adenosine-methyltransferase ZCCHC4, found in Bos taurus (Bovine).